Reading from the N-terminus, the 440-residue chain is 6-phospho-alpha-glucosidase (440 aa).

Position 4-70 (4-70) interacts with NAD(+); the sequence is FSIVVAGGGS…PDINFVYTTD (67 aa). Substrate is bound by residues R93 and N147. C169 is a Mn(2+) binding site. D170 serves as the catalytic Proton donor. H200 lines the Mn(2+) pocket. The Proton acceptor role is filled by Y263. R283 contributes to the substrate binding site.

The protein belongs to the glycosyl hydrolase 4 family. Homodimer. NAD(+) is required as a cofactor. Requires Mn(2+) as cofactor.

Its pathway is glycan degradation; palatinose degradation. In terms of biological role, in vitro, readily hydrolyzes p-nitrophenyl-alpha-D-glucopyranoside 6-phosphate (pNPalphaG6P), a chromogenic analog of the phosphorylated isomers of sucrose. In vivo, is probably involved in the degradation of the 6-phosphate derivatives of the sucrose isomers trehalulose, turanose, maltulose and palatinose, catalyzing their hydrolysis into glucose 6-phosphate (G6P) and fructose, which allows the bacterium to use these sugars as energy sources for growth. Is not able to hydrolyze the C2 or C4 chromogenic stereomers (i.e. pNPalpha-mannopyranoside-6P and pNPalpha-galactopyranoside-6P, respectively). This is 6-phospho-alpha-glucosidase (pagL) from Leptotrichia buccalis (strain ATCC 14201 / DSM 1135 / JCM 12969 / NCTC 10249 / C-1013-b).